The sequence spans 1444 residues: DNA polymerase III PolC-type (1444 aa).

Residues 428-584 enclose the Exonuclease domain; sequence YCVFDVETTG…FDAEATAYLA (157 aa).

The protein belongs to the DNA polymerase type-C family. PolC subfamily.

It localises to the cytoplasm. It carries out the reaction DNA(n) + a 2'-deoxyribonucleoside 5'-triphosphate = DNA(n+1) + diphosphate. In terms of biological role, required for replicative DNA synthesis. This DNA polymerase also exhibits 3' to 5' exonuclease activity. The protein is DNA polymerase III PolC-type of Listeria innocua serovar 6a (strain ATCC BAA-680 / CLIP 11262).